A 300-amino-acid chain; its full sequence is Cathepsin B-like CP2 (300 aa).

The N-terminal stretch at 1 to 19 is a signal peptide; that stretch reads MKLFLLAAAAFSAPALTVS. 3 cysteine pairs are disulfide-bonded: Cys-88–Cys-115, Cys-98–Cys-141, and Cys-134–Cys-177. Residue Cys-101 is part of the active site. Residues His-245 and Asn-266 contribute to the active site.

The protein belongs to the peptidase C1 family.

The protein resides in the vacuole. Thiol protease which is required for parasite excystation and invasion of the proximal small intestine of the human host. This is Cathepsin B-like CP2 (CP2) from Giardia intestinalis (Giardia lamblia).